The following is a 391-amino-acid chain: Alanine racemase, biosynthetic (391 aa).

Lysine 52 (proton acceptor; specific for D-alanine) is an active-site residue. Lysine 52 is subject to N6-(pyridoxal phosphate)lysine. Arginine 149 contacts substrate. Catalysis depends on tyrosine 271, which acts as the Proton acceptor; specific for L-alanine. A substrate-binding site is contributed by methionine 330.

This sequence belongs to the alanine racemase family. Requires pyridoxal 5'-phosphate as cofactor.

The catalysed reaction is L-alanine = D-alanine. It participates in amino-acid biosynthesis; D-alanine biosynthesis; D-alanine from L-alanine: step 1/1. The protein operates within cell wall biogenesis; peptidoglycan biosynthesis. Catalyzes the interconversion of L-alanine and D-alanine. Provides the D-alanine required for cell wall biosynthesis. The protein is Alanine racemase, biosynthetic (alr) of Agrobacterium fabrum (strain C58 / ATCC 33970) (Agrobacterium tumefaciens (strain C58)).